A 291-amino-acid polypeptide reads, in one-letter code: 4-hydroxy-tetrahydrodipicolinate synthase (291 aa).

Thr-44 provides a ligand contact to pyruvate. The active-site Proton donor/acceptor is Tyr-132. Catalysis depends on Lys-160, which acts as the Schiff-base intermediate with substrate. Ile-202 contributes to the pyruvate binding site.

It belongs to the DapA family. As to quaternary structure, homotetramer; dimer of dimers.

The protein localises to the cytoplasm. The catalysed reaction is L-aspartate 4-semialdehyde + pyruvate = (2S,4S)-4-hydroxy-2,3,4,5-tetrahydrodipicolinate + H2O + H(+). Its pathway is amino-acid biosynthesis; L-lysine biosynthesis via DAP pathway; (S)-tetrahydrodipicolinate from L-aspartate: step 3/4. Its function is as follows. Catalyzes the condensation of (S)-aspartate-beta-semialdehyde [(S)-ASA] and pyruvate to 4-hydroxy-tetrahydrodipicolinate (HTPA). This is 4-hydroxy-tetrahydrodipicolinate synthase from Syntrophus aciditrophicus (strain SB).